We begin with the raw amino-acid sequence, 85 residues long: Antitoxin VapB4 (85 aa).

It belongs to the phD/YefM antitoxin family. Interacts with cognate toxin VapC4.

Antitoxin component of a type II toxin-antitoxin (TA) system. Antitoxin that counteracts the effect of the VapC4 toxin. The polypeptide is Antitoxin VapB4 (vapB4) (Mycobacterium tuberculosis (strain CDC 1551 / Oshkosh)).